A 354-amino-acid chain; its full sequence is S-adenosylmethionine:tRNA ribosyltransferase-isomerase (354 aa).

Belongs to the QueA family. In terms of assembly, monomer.

The protein resides in the cytoplasm. It carries out the reaction 7-aminomethyl-7-carbaguanosine(34) in tRNA + S-adenosyl-L-methionine = epoxyqueuosine(34) in tRNA + adenine + L-methionine + 2 H(+). The protein operates within tRNA modification; tRNA-queuosine biosynthesis. Transfers and isomerizes the ribose moiety from AdoMet to the 7-aminomethyl group of 7-deazaguanine (preQ1-tRNA) to give epoxyqueuosine (oQ-tRNA). This Salmonella paratyphi C (strain RKS4594) protein is S-adenosylmethionine:tRNA ribosyltransferase-isomerase.